Here is a 165-residue protein sequence, read N- to C-terminus: LOB domain-containing protein 21 (165 aa).

An LOB domain is found at serine 10 to leucine 111.

This sequence belongs to the LOB domain-containing protein family.

This Arabidopsis thaliana (Mouse-ear cress) protein is LOB domain-containing protein 21 (LBD21).